We begin with the raw amino-acid sequence, 519 residues long: Protein M35 (519 aa).

Residues 485–519 (PVRPIRGGGQRMANMRGARPYSTVQRGRRRHESEV) are disordered. Positions 510-519 (RGRRRHESEV) are enriched in basic residues.

The protein resides in the host nucleus. Functionally, plays a role in the inhibition of host type I interferon production within the host nucleus. Targets specifically the NF-kappa-B-mediated interferon-beta transcription. In Mus musculus (Mouse), this protein is Protein M35 (M35).